The following is a 37-amino-acid chain: Large ribosomal subunit protein bL36 (37 aa).

Belongs to the bacterial ribosomal protein bL36 family.

This Bifidobacterium adolescentis (strain ATCC 15703 / DSM 20083 / NCTC 11814 / E194a) protein is Large ribosomal subunit protein bL36.